A 325-amino-acid chain; its full sequence is Prenytransferase adrG (325 aa).

7 helical membrane-spanning segments follow: residues leucine 47–leucine 67, methionine 71–isoleucine 91, alanine 117–tryptophan 137, proline 163–leucine 183, methionine 189–isoleucine 209, leucine 236–threonine 256, and leucine 258–leucine 278.

This sequence belongs to the UbiA prenyltransferase family. Requires Mg(2+) as cofactor.

It localises to the membrane. It catalyses the reaction 3,5-dimethylorsellinate + (2E,6E)-farnesyl diphosphate = (3R)-3-farnesyl-6-hydroxy-2,3,5-trimethyl-4-oxocyclohexa-1,5-diene-1-carboxylate + diphosphate + H(+). The protein operates within secondary metabolite biosynthesis; terpenoid biosynthesis. Its function is as follows. Prenytransferase; part of the gene cluster that mediates the biosynthesis of andrastins, meroterpenoid compounds that exhibit inhibitory activity against ras farnesyltransferase, suggesting that they could be promising leads for antitumor agents. The first step of the pathway is the synthesis of 3,5-dimethylorsellinic acid (DMOA) by the polyketide synthase adrD via condensation of one acetyl-CoA starter unit with 3 malonyl-CoA units and 2 methylations. DMAO is then converted to farnesyl-DMAO by the prenyltransferase adrG. The methyltransferase adrK catalyzes the methylation of the carboxyl group of farnesyl-DMAO to farnesyl-DMAO methyl ester which is further converted to epoxyfarnesyl-DMAO methyl ester by the FAD-dependent monooxygenase adrH. The terpene cyclase adrI then catalyzes the carbon skeletal rearrangement to generate the andrastin E, the first compound in the pathway having the andrastin scaffold, with the tetracyclic ring system. The post-cyclization tailoring enzymes adrF, adrE, adrJ, and adrA, are involved in the conversion of andrastin E into andrastin A. The short chain dehydrogenase adrF is responsible for the oxidation of the C-3 a hydroxyl group of andrastin E to yield the corresponding ketone, andrastin D. The ketoreductase adrE stereoselectively reduces the carbonyl moiety to reverse the stereochemistry of the C-3 position to yield andrastin F. The acetyltransferase adrJ is the acetyltransferase that attaches the acetyl group to the C-3 hydroxyl group of andrastin F to yield andrastin C. Finally, the cytochrome P450 monooxygenase adrA catalyzes two sequential oxidation reactions of the C-23 methyl group, to generate the corresponding alcohol andrastin B, and aldehyde andrastin A. This chain is Prenytransferase adrG, found in Penicillium rubens (strain ATCC 28089 / DSM 1075 / NRRL 1951 / Wisconsin 54-1255) (Penicillium chrysogenum).